The chain runs to 348 residues: Dihydroorotase (348 aa).

Positions 14 and 16 each coordinate Zn(2+). Residues histidine 16–arginine 18 and asparagine 42 each bind substrate. Positions 100, 137, and 175 each coordinate Zn(2+). Lysine 100 bears the N6-carboxylysine mark. Residue histidine 137 coordinates substrate. Leucine 220 is a substrate binding site. Aspartate 248 contributes to the Zn(2+) binding site. Aspartate 248 is an active-site residue. Substrate-binding residues include histidine 252 and alanine 264.

It belongs to the metallo-dependent hydrolases superfamily. DHOase family. Class II DHOase subfamily. In terms of assembly, homodimer. The cofactor is Zn(2+).

The enzyme catalyses (S)-dihydroorotate + H2O = N-carbamoyl-L-aspartate + H(+). It functions in the pathway pyrimidine metabolism; UMP biosynthesis via de novo pathway; (S)-dihydroorotate from bicarbonate: step 3/3. Catalyzes the reversible cyclization of carbamoyl aspartate to dihydroorotate. The polypeptide is Dihydroorotase (Pseudomonas putida (strain W619)).